The following is a 537-amino-acid chain: Phosphoenolpyruvate carboxykinase (ATP) (537 aa).

Residues Arg61, Tyr195, and Lys201 each coordinate substrate. ATP contacts are provided by residues Lys201, His220, and 236-244 (GLSGTGKTT). Lys201 and His220 together coordinate Mn(2+). Asp257 contributes to the Mn(2+) binding site. 3 residues coordinate ATP: Glu285, Arg323, and Thr448. Residue Arg323 coordinates substrate.

It belongs to the phosphoenolpyruvate carboxykinase (ATP) family. Mn(2+) serves as cofactor.

It is found in the cytoplasm. The catalysed reaction is oxaloacetate + ATP = phosphoenolpyruvate + ADP + CO2. It participates in carbohydrate biosynthesis; gluconeogenesis. Functionally, involved in the gluconeogenesis. Catalyzes the conversion of oxaloacetate (OAA) to phosphoenolpyruvate (PEP) through direct phosphoryl transfer between the nucleoside triphosphate and OAA. The sequence is that of Phosphoenolpyruvate carboxykinase (ATP) from Rhodopseudomonas palustris (strain TIE-1).